The chain runs to 449 residues: Sensor histidine protein kinase/phosphatase WalK (449 aa).

Residues 1–13 (MLDLLKQTIFTRD) are Extracellular-facing. A helical transmembrane segment spans residues 14 to 34 (FIFILILLGFILVVTLLLLEN). Residues 35 to 87 (RRDNIQLKQINQKVKDLIAGDYSKVLDMQGGSEITNITNNLNDLSEVIRLTQE) enclose the HAMP domain. Residues 35–449 (RRDNIQLKQI…EEVWEDEVED (415 aa)) lie on the Cytoplasmic side of the membrane. One can recognise a PAS domain in the interval 92-158 (ESKRLNSILF…YELRDLITQS (67 aa)). Residues 157 to 211 (QSPELLLDSQDINGEYLNLRVRFALIRRESGFISGLVAVLHDTTEQEKEERERRL) enclose the PAC domain. Residues 215–435 (NVSHELRTPL…TFTIVLPYDK (221 aa)) form the Histidine kinase domain. A Phosphohistidine modification is found at His-218.

As to quaternary structure, may form homodimers. May interact with serine/threonine-protein kinase StkP; the interaction may play a role in regulating Walk signal transduction. Post-translationally, autophosphorylated.

Its subcellular location is the membrane. The enzyme catalyses ATP + protein L-histidine = ADP + protein N-phospho-L-histidine.. Its function is as follows. Member of the two-component regulatory system WalK/WalR that regulates genes involved in cell wall metabolism. Functions as a sensor protein kinase which is autophosphorylated at a histidine residue and transfers its phosphate group to WalR. In turn, WalR binds to the upstream promoter regions of target genes to positively and negatively regulate their expression. Required to maintain expression of WalRK regulon genes in exponentially growing cells, including peptidoglycan hydrolase pcsB. Phosphorylates WalR and also capable of dephosphorylation of WalR. WalK phosphatase activity is probably involved in preventing cross-talk from PnpS and other non-cognate sensor kinases during exponential growth. May be considered a potential virulence factor. The protein is Sensor histidine protein kinase/phosphatase WalK of Streptococcus pneumoniae serotype 2 (strain D39 / NCTC 7466).